We begin with the raw amino-acid sequence, 712 residues long: BTB/POZ domain-containing protein 18 (712 aa).

In terms of domain architecture, BTB spans 34–102 (CDVLLQAEGE…LYTSEMEVSQ (69 aa)). Disordered stretches follow at residues 157-176 (VTPS…PCPL), 212-355 (RACP…EGQV), and 374-410 (ETPL…QEMS). A compositionally biased stretch (polar residues) spans 218–228 (QEKNSSPSSHS). The span at 229-238 (QEPRENKNDT) shows a compositional bias: basic and acidic residues. Over residues 277-288 (SKPSSILSGSSS) the composition is skewed to low complexity. The segment covering 303–313 (VNKETPEDKPK) has biased composition (basic and acidic residues). Over residues 396 to 410 (PSGTQPFSSNEQEMS) the composition is skewed to polar residues. 3 positions are modified to phosphoserine: Ser420, Ser671, and Ser672. Disordered regions lie at residues 653–676 (KAGK…EEEE) and 691–712 (TTVP…DILT). The segment covering 702–712 (SESETEVDILT) has biased composition (acidic residues).

It is found in the nucleus. In terms of biological role, specifically required during spermatogenesis to promote expression of piRNA precursors. The piRNA metabolic process mediates the repression of transposable elements during meiosis by forming complexes composed of piRNAs and Piwi proteins and governs the methylation and subsequent repression of transposons, which is essential for the germline integrity. Acts by facilitating transcription elongation at piRNA loci during pachytene. The chain is BTB/POZ domain-containing protein 18 from Homo sapiens (Human).